A 272-amino-acid polypeptide reads, in one-letter code: Glutamate racemase (272 aa).

Substrate is bound by residues 16–17 (DS) and 48–49 (YG). The active-site Proton donor/acceptor is the cysteine 79. 80–81 (NT) contributes to the substrate binding site. Catalysis depends on cysteine 191, which acts as the Proton donor/acceptor. 192–193 (TH) contributes to the substrate binding site.

It belongs to the aspartate/glutamate racemases family.

The catalysed reaction is L-glutamate = D-glutamate. The protein operates within cell wall biogenesis; peptidoglycan biosynthesis. In terms of biological role, provides the (R)-glutamate required for cell wall biosynthesis. This Chlorobaculum tepidum (strain ATCC 49652 / DSM 12025 / NBRC 103806 / TLS) (Chlorobium tepidum) protein is Glutamate racemase.